Consider the following 1390-residue polypeptide: MPSMLGSMMVASTSAPSLQEALENAGRLIDRQLQEDRMYPDLSELLMVSAPNSPTVSGMSDMDYPLQGPGLLSVPSLPEISTIRRVPLRLSWLNSLDTCSVTAMMGVFPPISRAWLTIDSDIFMWNYEDGGDLAYFDGLSETILAVGLVKPKAGIFQPHVRHLLVLATPVDIVILGLSYANVQTGSGILNDSVCGGLQLLPDPLYSLPTDNTYLLTITSTDNGRIFLAGKDGCLYEVAYQAEAGWFSQRCRKINHSKSSLSFLVPSLLQFTFSEDDPIVQIEIDNSRNILYTRSEKGVIQVYDLGHDGQGMSRVASVSQNAIVCAAGNIARTIDRSVFKPIVQIAVIENSESLDCQLLAVTHAGVRLYFSTCPFRQPLARPNTLTLVHVRLPPGFSASSTVEKPSKVHKALYSKGILLMTASENEDNDILWCVNHDTFPFQKPMMETQMTTRVDGHSWALSAIDELKVDKIITPLNKDHIPITDSPVVVQQHMLPPKKFVLLSAQGSLMFHKLRPVDQLRHLLVSNVGGDGEEIERFFKLHQEDQACATCLILACSTAACDREVSAWATRAFFRYGGEAQMRFPATLPTPSNVGPILGSPMYSSSPVPTGSPYPNPSSLGTPSHGAQPPTMSTPMSAVGNPAMQAASLSGLTGPEIVYSGKHNGICIYFSRIMGNIWDASLVVERVFKSSNREITAIESSVPIQLLESVLQELKGLQEFLDRNSQFSGGPLGNPNTTAKVQQRLLGVMRPENGNTQQMQQELQRKFHEAQLSEKISLQAIQQLVRKSYQALALWKLLCEHQFTVIVGELQKEFQEQLKITTFKDLVIREKEVTGALIASLINCYIRDNAAVDGISLHLQDTCPLLYSTDDAVCSKANELLQRSRQVQSKSERERMLRESLKEYQKISNQVDLPSVCAQYRQVRFYEGVVELSLTAAEKKDPQGLGLHFYKHGEPEEDVVGLQTFQERLNSYKCITDTLQELVNQSKAAPQSPSVPKKPGPPVLSSDPNMLSNEEAGHHFEQMLKLAQRSKDELFSIALYNWLIQADLADKLLQIASPFLEPHLVRMAKVDQNRVRYMDLLWRYYEKNRSFSSAARVLSKLADMHSTEISLQQRLEYIARAILSAKSSTAISSIAADGEFLHELEEKMEVARIQLQIQETLQRQYSHHSSVQDAISQLDSELMDITKLYGEFADPFKLAECKLAIIHCAGYSDPILVHTLWQDIIEKELSDSVTLSSSDRMHALSLKLVLLGKIYAGTPRFFPLDFIVQFLEQQVCTLNWDVGFVIQTMNEIGVPLPRLLEVYDQLFKSRDPFWNRVKSPLHLLDCIHVLLTRYVENPSLVLNCERRRFTNLCLDAVCGYLVELQSMSSSVAVQAITGNFKSLQAKLERLH.

O-linked (GlcNAc) serine glycosylation is present at Ser-525. The disordered stretch occupies residues 598-632; sequence GSPMYSSSPVPTGSPYPNPSSLGTPSHGAQPPTMS. Lys-739 is covalently cross-linked (Glycyl lysine isopeptide (Lys-Gly) (interchain with G-Cter in SUMO2)). The segment at 984–1011 is disordered; that stretch reads QSKAAPQSPSVPKKPGPPVLSSDPNMLS. Residue Ser-1056 is modified to Phosphoserine.

Belongs to the non-repetitive/WGA-negative nucleoporin family. Interacts with GLE1. Able to form a heterotrimer with GLE1 and NUP42 in vitro. Forms a complex with NUP35, NUP93, NUP205 and lamin B. Phosphorylated. Phosphorylation and dephosphorylation may be important for the function of NUP155 and may play a role in the reversible disassembly of the nuclear pore complex during mitosis. In terms of processing, disulfide-linked to NUP62. The inner channel of the NPC has a different redox environment from the cytoplasm and allows the formation of interchain disulfide bonds between some nucleoporins, the significant increase of these linkages upon oxidative stress reduces the permeability of the NPC.

The protein resides in the nucleus. It localises to the nuclear pore complex. It is found in the nucleus membrane. Functionally, essential component of nuclear pore complex. Could be essessential for embryogenesis. Nucleoporins may be involved both in binding and translocating proteins during nucleocytoplasmic transport. This chain is Nuclear pore complex protein Nup155 (Nup155), found in Rattus norvegicus (Rat).